Here is a 364-residue protein sequence, read N- to C-terminus: Dihydroorotate dehydrogenase (quinone) (364 aa).

Residues 61 to 65 and Thr-85 contribute to the FMN site; that span reads AGYDK. Lys-65 serves as a coordination point for substrate. 110–114 serves as a coordination point for substrate; it reads NRLGF. Residues Asn-139 and Asn-170 each coordinate FMN. Asn-170 contributes to the substrate binding site. Ser-173 serves as the catalytic Nucleophile. Asn-175 serves as a coordination point for substrate. Lys-215 and Ser-243 together coordinate FMN. Residue 244 to 245 participates in substrate binding; that stretch reads NT. FMN-binding positions include Gly-266, Gly-295, and 316–317; that span reads YS.

Belongs to the dihydroorotate dehydrogenase family. Type 2 subfamily. Monomer. Requires FMN as cofactor.

Its subcellular location is the cell membrane. It carries out the reaction (S)-dihydroorotate + a quinone = orotate + a quinol. It functions in the pathway pyrimidine metabolism; UMP biosynthesis via de novo pathway; orotate from (S)-dihydroorotate (quinone route): step 1/1. In terms of biological role, catalyzes the conversion of dihydroorotate to orotate with quinone as electron acceptor. The polypeptide is Dihydroorotate dehydrogenase (quinone) (Brucella melitensis biotype 2 (strain ATCC 23457)).